The sequence spans 260 residues: HMP-PP phosphatase (260 aa).

Catalysis depends on aspartate 8, which acts as the Nucleophile. Aspartate 8, aspartate 10, and aspartate 212 together coordinate Mg(2+).

Belongs to the HAD-like hydrolase superfamily. Cof family. Mg(2+) is required as a cofactor.

The enzyme catalyses 4-amino-2-methyl-5-(diphosphooxymethyl)pyrimidine + H2O = 4-amino-2-methyl-5-(phosphooxymethyl)pyrimidine + phosphate + H(+). Functionally, catalyzes the hydrolysis of 4-amino-2-methyl-5-hydroxymethylpyrimidine pyrophosphate (HMP-PP) to 4-amino-2-methyl-5-hydroxymethylpyrimidine phosphate (HMP-P). This chain is HMP-PP phosphatase, found in Shigella boydii serotype 4 (strain Sb227).